Reading from the N-terminus, the 51-residue chain is Sperm protamine P1 (51 aa).

This sequence belongs to the protamine P1 family. As to expression, testis.

The protein resides in the nucleus. The protein localises to the chromosome. Its function is as follows. Protamines substitute for histones in the chromatin of sperm during the haploid phase of spermatogenesis. They compact sperm DNA into a highly condensed, stable and inactive complex. The chain is Sperm protamine P1 (PRM1) from Trachypithecus cristatus (Silvered leaf-monkey).